The following is a 362-amino-acid chain: Phosphoserine aminotransferase (362 aa).

L-glutamate is bound by residues serine 9 and arginine 42. Pyridoxal 5'-phosphate is bound by residues glycine 76–arginine 77, tryptophan 102, threonine 153, aspartate 174, and glutamine 197. The residue at position 198 (lysine 198) is an N6-(pyridoxal phosphate)lysine. Residue asparagine 239–threonine 240 participates in pyridoxal 5'-phosphate binding.

It belongs to the class-V pyridoxal-phosphate-dependent aminotransferase family. SerC subfamily. In terms of assembly, homodimer. The cofactor is pyridoxal 5'-phosphate.

The protein localises to the cytoplasm. It carries out the reaction O-phospho-L-serine + 2-oxoglutarate = 3-phosphooxypyruvate + L-glutamate. It catalyses the reaction 4-(phosphooxy)-L-threonine + 2-oxoglutarate = (R)-3-hydroxy-2-oxo-4-phosphooxybutanoate + L-glutamate. It participates in amino-acid biosynthesis; L-serine biosynthesis; L-serine from 3-phospho-D-glycerate: step 2/3. The protein operates within cofactor biosynthesis; pyridoxine 5'-phosphate biosynthesis; pyridoxine 5'-phosphate from D-erythrose 4-phosphate: step 3/5. Functionally, catalyzes the reversible conversion of 3-phosphohydroxypyruvate to phosphoserine and of 3-hydroxy-2-oxo-4-phosphonooxybutanoate to phosphohydroxythreonine. This is Phosphoserine aminotransferase from Klebsiella pneumoniae (strain 342).